A 279-amino-acid chain; its full sequence is Large ribosomal subunit protein uL2 (279 aa).

The disordered stretch occupies residues 222-279 (GMAMNPVDHPMGGGEGKSKSGGGRRHPKSPWGQLAKGLKTRNKKKASQKLIVRGRNAK). Residues 232–242 (MGGGEGKSKSG) show a composition bias toward gly residues. The span at 259–268 (LKTRNKKKAS) shows a compositional bias: basic residues.

This sequence belongs to the universal ribosomal protein uL2 family. Part of the 50S ribosomal subunit. Forms a bridge to the 30S subunit in the 70S ribosome.

Functionally, one of the primary rRNA binding proteins. Required for association of the 30S and 50S subunits to form the 70S ribosome, for tRNA binding and peptide bond formation. It has been suggested to have peptidyltransferase activity; this is somewhat controversial. Makes several contacts with the 16S rRNA in the 70S ribosome. The chain is Large ribosomal subunit protein uL2 from Chlorobium phaeobacteroides (strain DSM 266 / SMG 266 / 2430).